Here is a 693-residue protein sequence, read N- to C-terminus: Glycine--tRNA ligase beta subunit (693 aa).

It belongs to the class-II aminoacyl-tRNA synthetase family. As to quaternary structure, tetramer of two alpha and two beta subunits.

It localises to the cytoplasm. The catalysed reaction is tRNA(Gly) + glycine + ATP = glycyl-tRNA(Gly) + AMP + diphosphate. The sequence is that of Glycine--tRNA ligase beta subunit from Vibrio vulnificus (strain YJ016).